A 241-amino-acid polypeptide reads, in one-letter code: MSEVKYKRVIMKLSGEALAGDKGTGINPPVIQKVAEELRDVHDLGVQIAIVVGGGNMWRGETGEQLGMERVQADYIGMLGTVMNALALQDSLESLGVPTRVQTSIEMRQIAEPYIRRKAVRHLEKNRIVIFAAGTGSPYFSTDTTSALRAAEIGAEAILMAKNGVDGIYSADPNVDPDAVKFDELTHMDIIDKGLNVMDTTASSLSMENNIPLVVFNLNQAGNIKKVVAGENIGTTVRGEE.

Residue 12-15 coordinates ATP; it reads KLSG. Residues 20–25 form an involved in allosteric activation by GTP region; sequence GDKGTG. Position 54 (Gly54) interacts with UMP. 2 residues coordinate ATP: Gly55 and Arg59. Residues Asp74 and 135-142 each bind UMP; that span reads TGSPYFST. Residues Asn163, Tyr169, and Asp172 each contribute to the ATP site.

It belongs to the UMP kinase family. Homohexamer.

It is found in the cytoplasm. It carries out the reaction UMP + ATP = UDP + ADP. Its pathway is pyrimidine metabolism; CTP biosynthesis via de novo pathway; UDP from UMP (UMPK route): step 1/1. Allosterically activated by GTP. Inhibited by UTP. In terms of biological role, catalyzes the reversible phosphorylation of UMP to UDP. The chain is Uridylate kinase from Pediococcus pentosaceus (strain ATCC 25745 / CCUG 21536 / LMG 10740 / 183-1w).